The sequence spans 430 residues: Asparagine--tRNA ligase (430 aa).

It belongs to the class-II aminoacyl-tRNA synthetase family. Homodimer.

It is found in the cytoplasm. The catalysed reaction is tRNA(Asn) + L-asparagine + ATP = L-asparaginyl-tRNA(Asn) + AMP + diphosphate + H(+). This is Asparagine--tRNA ligase from Staphylococcus aureus (strain MW2).